Reading from the N-terminus, the 161-residue chain is Endoribonuclease YbeY (161 aa).

3 residues coordinate Zn(2+): H127, H131, and H137.

Belongs to the endoribonuclease YbeY family. Zn(2+) is required as a cofactor.

It localises to the cytoplasm. Its function is as follows. Single strand-specific metallo-endoribonuclease involved in late-stage 70S ribosome quality control and in maturation of the 3' terminus of the 16S rRNA. This is Endoribonuclease YbeY from Listeria innocua serovar 6a (strain ATCC BAA-680 / CLIP 11262).